The following is an 876-amino-acid chain: Valine--tRNA ligase (876 aa).

The 'HIGH' region motif lies at 43–53; sequence PNVTGVLHMGH. The short motif at 533–537 is the 'KMSKS' region element; the sequence is KMSKS. Lys-536 is a binding site for ATP. Residues 804–876 are a coiled coil; the sequence is GALIDVEEEI…DSLNQLQSTK (73 aa).

It belongs to the class-I aminoacyl-tRNA synthetase family. ValS type 1 subfamily. As to quaternary structure, monomer.

The protein localises to the cytoplasm. The enzyme catalyses tRNA(Val) + L-valine + ATP = L-valyl-tRNA(Val) + AMP + diphosphate. Catalyzes the attachment of valine to tRNA(Val). As ValRS can inadvertently accommodate and process structurally similar amino acids such as threonine, to avoid such errors, it has a 'posttransfer' editing activity that hydrolyzes mischarged Thr-tRNA(Val) in a tRNA-dependent manner. This Porphyromonas gingivalis (strain ATCC 33277 / DSM 20709 / CIP 103683 / JCM 12257 / NCTC 11834 / 2561) protein is Valine--tRNA ligase.